The chain runs to 966 residues: MEQDYKPHEIEKKWQKKWDESQIFQAEPDKREKFFITIPYPYLNGNLHAGHTRTFTIGDVVARHKRMLGYNVLYPMGFHVTGTPIVGLAELIANRDPQTMDVYERLHGIPGDILPTLDTPEKIVDYFKRESEKAMRNIGYSIDWRRKFTTTDPTYKKFIEWQYIRLGEKGLIVKGSHPVKWCPNDNNPVEDHDILYGEEATIVEYTLIKFRYKDLVLPCATLRPETTYGVTNLWVNPDVTYVKAKVTLDGNEEFWVVSKEAFRKLTFTDRTVEYIEDVPAKSIIGIKLTNPVTDDEVISLPASFVRPENGSGIVMSVPAHAPFDYLALRDLYDVDLSEYGITEDLRKIKLISLIKVPEFGEFPAKEIVESMGITSQKDPKAEEATKIVYRREFHGGVLKEITGKYEGQAVSKIKDILTRDFISSNTGETFYEFSEPVVCRCGTPCVVNMVKGQWFLNYSNPEWKAKVYKCLAQMRIVPEEYRVEFENKIDWLKDKACARRKGLGTHLPFDKEWLIESLGDSTIYMSYYIIARFIENGELKIENLTLSFFDYVLLGKGDSAAASADTGLSPELLEEIRRHFNYWYPVDLRSSGKDLVPNHLLFFLFHHVALFEEDKWPKALAVNGFVSLEGQKMSKSKGPILTMESAVSKYGADITRMYILSTAEQTQDADWQRTGIESARRQVDRFYSFAKGVIESGKRADLSTELKQIDRWILSRIQNYIRDTNSALYSIQTREAIQNSFFLLQNDVKWYQRRGGETLLYYVLDNWVRLMAPFTPHLCEEIWEAMGHKDPVSLAQYPLYNEGLIDDGAELAEEMIKGTLEDVEEIIRVTKMTPQKVHLYTAPTWKAEAIRCACEMQLECSLEVGNLIKKLMANPDLKRFGKEIPKFVQKIVPEFKSGSSDRYEILTGPDIDEQALLKESISFLEKEIGCSVEVHSADSPAFDPEKKARFAEPLRPAIYIEGKKKE.

A 'HIGH' region motif is present at residues 41 to 51 (PYLNGNLHAGH). The short motif at 632–636 (KMSKS) is the 'KMSKS' region element. Residue Lys-635 participates in ATP binding.

This sequence belongs to the class-I aminoacyl-tRNA synthetase family.

Its subcellular location is the cytoplasm. It catalyses the reaction tRNA(Leu) + L-leucine + ATP = L-leucyl-tRNA(Leu) + AMP + diphosphate. The sequence is that of Leucine--tRNA ligase from Methanosarcina barkeri (strain Fusaro / DSM 804).